A 1481-amino-acid polypeptide reads, in one-letter code: ABC-type transporter braE (1481 aa).

A run of 6 helical transmembrane segments spans residues 27-47 (FTVK…FILA), 86-106 (LILI…SSAL), 130-150 (IFLS…ARTY), 159-179 (EIAF…MLLL), 269-289 (LYVP…SFFC), and 308-328 (PANI…VIAI). An ABC transmembrane type-1 1 domain is found at 281-549 (LAAIGSFFCQ…LLETLPQMAA (269 aa)). The N-linked (GlcNAc...) asparagine glycan is linked to N367. 3 consecutive transmembrane segments (helical) span residues 389-409 (ELWG…NLLG), 410-430 (VAFI…SFFM), and 491-511 (LMLT…PITF). One can recognise an ABC transporter 1 domain in the interval 594–823 (VAIKDGSFGW…QSYIHSLGVK (230 aa)). Residue 627–634 (GPIASGKS) coordinates ATP. N-linked (GlcNAc...) asparagine glycosylation is found at N671 and N813. The next 6 helical transmembrane spans lie at 887–907 (IAIF…TIWL), 928–948 (AIYA…GVLL), 1001–1021 (SALL…AVIA), 1026–1046 (YLAI…KFYL), 1111–1131 (LHFV…SLAV), and 1144–1164 (LVTL…YTAL). The region spanning 887 to 1166 (IAIFTSGLLY…VVIYYTALET (280 aa)) is the ABC transmembrane type-1 2 domain. N-linked (GlcNAc...) asparagine glycans are attached at residues N1207 and N1232. One can recognise an ABC transporter 2 domain in the interval 1224 to 1477 (LTTNELSSND…PGTRFGELWS (254 aa)). Position 1260–1267 (1260–1267 (GRTGSGKS)) interacts with ATP. Residues N1330 and N1364 are each glycosylated (N-linked (GlcNAc...) asparagine).

This sequence belongs to the ABC transporter superfamily. ABCC family. Conjugate transporter (TC 3.A.1.208) subfamily.

Its subcellular location is the membrane. Functionally, ABC-type transporter; part of the gene cluster that mediates the biosynthesis of the brasilane terpene glycosides brasilane D and E. This chain is ABC-type transporter braE, found in Annulohypoxylon truncatum (Hypoxylon truncatum).